Here is a 437-residue protein sequence, read N- to C-terminus: Adenylosuccinate synthetase 1 (437 aa).

GTP-binding positions include 13 to 19 (GDEGKGK) and 41 to 43 (GHT). Residue Asp-14 is the Proton acceptor of the active site. Residues Asp-14 and Gly-41 each contribute to the Mg(2+) site. IMP-binding positions include 14–17 (DEGK), 39–42 (NAGH), Thr-130, Arg-144, Gln-225, Thr-240, and Arg-310. His-42 functions as the Proton donor in the catalytic mechanism. 306–312 (ATTGRLR) contributes to the substrate binding site. GTP contacts are provided by residues Arg-312, 338–340 (KLD), and 421–423 (STG).

Belongs to the adenylosuccinate synthetase family. In terms of assembly, homodimer. Requires Mg(2+) as cofactor.

Its subcellular location is the cytoplasm. It catalyses the reaction IMP + L-aspartate + GTP = N(6)-(1,2-dicarboxyethyl)-AMP + GDP + phosphate + 2 H(+). Its pathway is purine metabolism; AMP biosynthesis via de novo pathway; AMP from IMP: step 1/2. In terms of biological role, plays an important role in the de novo pathway of purine nucleotide biosynthesis. Catalyzes the first committed step in the biosynthesis of AMP from IMP. The polypeptide is Adenylosuccinate synthetase 1 (Pseudoalteromonas translucida (strain TAC 125)).